The chain runs to 529 residues: Glucose-6-phosphate isomerase (529 aa).

Glu322 functions as the Proton donor in the catalytic mechanism. Residues His351 and Lys455 contribute to the active site.

This sequence belongs to the GPI family.

The protein resides in the cytoplasm. The enzyme catalyses alpha-D-glucose 6-phosphate = beta-D-fructose 6-phosphate. It functions in the pathway carbohydrate biosynthesis; gluconeogenesis. The protein operates within carbohydrate degradation; glycolysis; D-glyceraldehyde 3-phosphate and glycerone phosphate from D-glucose: step 2/4. Catalyzes the reversible isomerization of glucose-6-phosphate to fructose-6-phosphate. In Acaryochloris marina (strain MBIC 11017), this protein is Glucose-6-phosphate isomerase.